The chain runs to 396 residues: Probable sugar efflux transporter (396 aa).

12 helical membrane-spanning segments follow: residues 15 to 35 (VVTL…PVGL), 50 to 70 (VGIM…PFML), 81 to 101 (LICL…SWSF), 103 to 123 (VLVI…SITA), 136 to 156 (AQAL…GLPL), 170 to 190 (FFAI…LLPL), 209 to 229 (PALM…YTAY), 246 to 266 (FATA…VIFG), 275 to 295 (ALVS…LPAA), 299 to 319 (IHLG…GLGM), 333 to 353 (VAMA…ALVG), and 364 to 384 (MIGY…IIIF).

It belongs to the major facilitator superfamily. SotB (TC 2.A.1.2) family.

It localises to the cell inner membrane. Its function is as follows. Involved in the efflux of sugars. The physiological role may be the reduction of the intracellular concentration of toxic sugars or sugar metabolites. This Escherichia coli O139:H28 (strain E24377A / ETEC) protein is Probable sugar efflux transporter.